The chain runs to 701 residues: Polyribonucleotide nucleotidyltransferase (701 aa).

Aspartate 487 and aspartate 493 together coordinate Mg(2+). A KH domain is found at 554 to 613 (PTMIAMKIDTDKIRDVIGKGGATIRAICEETKASIDIEDDGSIKIFGETKEAADAAKQRI). Residues 623 to 691 (GKIYVGKVER…NRGRIKLSIK (69 aa)) enclose the S1 motif domain.

The protein belongs to the polyribonucleotide nucleotidyltransferase family. Component of the RNA degradosome, which is a multiprotein complex involved in RNA processing and mRNA degradation. The cofactor is Mg(2+).

The protein resides in the cytoplasm. It catalyses the reaction RNA(n+1) + phosphate = RNA(n) + a ribonucleoside 5'-diphosphate. Functionally, involved in mRNA degradation. Catalyzes the phosphorolysis of single-stranded polyribonucleotides processively in the 3'- to 5'-direction. The polypeptide is Polyribonucleotide nucleotidyltransferase (Pseudomonas putida (strain ATCC 47054 / DSM 6125 / CFBP 8728 / NCIMB 11950 / KT2440)).